The chain runs to 195 residues: Nascent polypeptide-associated complex subunit alpha (195 aa).

2 disordered regions span residues 1–59 (MTGS…SRSE) and 132–153 (TREAPQLKTVEEDENEDVEEDS). Residues 7 to 16 (TRQKEVKEPQ) are compositionally biased toward basic and acidic residues. Acidic residues predominate over residues 19 to 33 (VSDDSDNEAVEQELT). Basic and acidic residues predominate over residues 47–59 (DHIDKQAKQSRSE). Residues 56–121 (SRSEKKARKL…AKIEDLTQHA (66 aa)) form the NAC-A/B domain. The span at 142-153 (EEDENEDVEEDS) shows a compositional bias: acidic residues.

The protein belongs to the NAC-alpha family. May be part of the nascent polypeptide-associated complex (NAC), which is a heterodimer of icd-2 and icd-1 (via NAC-A/B domains).

It localises to the cytoplasm. In terms of biological role, may prevent inappropriate targeting of non-secretory polypeptides to the endoplasmic reticulum (ER). Plays a role in the response to heat stress. The chain is Nascent polypeptide-associated complex subunit alpha from Caenorhabditis elegans.